We begin with the raw amino-acid sequence, 267 residues long: tRNA-cytidine(32) 2-sulfurtransferase 2 (267 aa).

Residues 42–47 (SGGKDS) carry the PP-loop motif motif. [4Fe-4S] cluster-binding residues include cysteine 117, cysteine 120, and cysteine 208.

Belongs to the TtcA family. In terms of assembly, homodimer. Mg(2+) is required as a cofactor. It depends on [4Fe-4S] cluster as a cofactor.

The protein localises to the cytoplasm. It catalyses the reaction cytidine(32) in tRNA + S-sulfanyl-L-cysteinyl-[cysteine desulfurase] + AH2 + ATP = 2-thiocytidine(32) in tRNA + L-cysteinyl-[cysteine desulfurase] + A + AMP + diphosphate + H(+). The protein operates within tRNA modification. Functionally, catalyzes the ATP-dependent 2-thiolation of cytidine in position 32 of tRNA, to form 2-thiocytidine (s(2)C32). The sulfur atoms are provided by the cysteine/cysteine desulfurase (IscS) system. The polypeptide is tRNA-cytidine(32) 2-sulfurtransferase 2 (Francisella tularensis subsp. holarctica (strain FTNF002-00 / FTA)).